A 270-amino-acid chain; its full sequence is 4-hydroxy-tetrahydrodipicolinate reductase (270 aa).

NAD(+) contacts are provided by residues 8-13 (GALGRM), Asp34, 102-104 (GTT), and 128-131 (SQNY). His160 functions as the Proton donor/acceptor in the catalytic mechanism. A (S)-2,3,4,5-tetrahydrodipicolinate-binding site is contributed by His161. Lys164 serves as the catalytic Proton donor. A (S)-2,3,4,5-tetrahydrodipicolinate-binding site is contributed by 170-171 (GT).

It belongs to the DapB family.

Its subcellular location is the cytoplasm. The enzyme catalyses (S)-2,3,4,5-tetrahydrodipicolinate + NAD(+) + H2O = (2S,4S)-4-hydroxy-2,3,4,5-tetrahydrodipicolinate + NADH + H(+). It catalyses the reaction (S)-2,3,4,5-tetrahydrodipicolinate + NADP(+) + H2O = (2S,4S)-4-hydroxy-2,3,4,5-tetrahydrodipicolinate + NADPH + H(+). The protein operates within amino-acid biosynthesis; L-lysine biosynthesis via DAP pathway; (S)-tetrahydrodipicolinate from L-aspartate: step 4/4. Functionally, catalyzes the conversion of 4-hydroxy-tetrahydrodipicolinate (HTPA) to tetrahydrodipicolinate. This Methanococcus maripaludis (strain C6 / ATCC BAA-1332) protein is 4-hydroxy-tetrahydrodipicolinate reductase.